A 229-amino-acid polypeptide reads, in one-letter code: MKINNVLTAKFIKRPNRFVAYVYLNNEEVKVHVPNTGRCREILIPDTTVVLREGTNPNRKTKYDLIAAYKNDKLINIDSQVPNAVVEEALKNKKIQPLVKFNNIKREQTFGNSRFDFKLWDDSNNKYYLEVKGVTLEDKGNCMFPDAPTERGTKHILELIEIKESHMGAGILFLVQLSGAKTFSPHKEMDKKFSEALTLAHKKGVDIFCYDCNVGEDYIEIKDPVEIIL.

Belongs to the SfsA family.

This is Sugar fermentation stimulation protein homolog from Clostridium novyi (strain NT).